We begin with the raw amino-acid sequence, 146 residues long: Cystatin-C (146 aa).

An N-terminal signal peptide occupies residues 1-26 (MAGPLRAPLLLLAILAVALAVSPAAG). Phosphoserine; by FAM20C is present on Ser-43. Positions 81–85 (QIVAG) match the Secondary area of contact motif. 2 disulfide bridges follow: Cys-99–Cys-109 and Cys-123–Cys-143.

It belongs to the cystatin family. In terms of assembly, homodimer. Post-translationally, the Thr-25 variant is O-glycosylated with a core 1 or possibly core 8 glycan. The signal peptide of the O-glycosylated Thr-25 variant is cleaved between Ala-20 and Val-21. As to expression, expressed in submandibular and sublingual saliva but not in parotid saliva (at protein level). Expressed in various body fluids, such as the cerebrospinal fluid and plasma. Expressed in highest levels in the epididymis, vas deferens, brain, thymus, and ovary and the lowest in the submandibular gland.

The protein localises to the secreted. In terms of biological role, as an inhibitor of cysteine proteinases, this protein is thought to serve an important physiological role as a local regulator of this enzyme activity. The chain is Cystatin-C (CST3) from Homo sapiens (Human).